Here is a 183-residue protein sequence, read N- to C-terminus: ATP synthase subunit delta, chloroplastic (183 aa).

It belongs to the ATPase delta chain family. In terms of assembly, F-type ATPases have 2 components, F(1) - the catalytic core - and F(0) - the membrane proton channel. F(1) has five subunits: alpha(3), beta(3), gamma(1), delta(1), epsilon(1). CF(0) has four main subunits: a(1), b(1), b'(1) and c(10-14). The alpha and beta chains form an alternating ring which encloses part of the gamma chain. F(1) is attached to F(0) by a central stalk formed by the gamma and epsilon chains, while a peripheral stalk is formed by the delta, b and b' chains.

It is found in the plastid. It localises to the chloroplast thylakoid membrane. Its function is as follows. F(1)F(0) ATP synthase produces ATP from ADP in the presence of a proton or sodium gradient. F-type ATPases consist of two structural domains, F(1) containing the extramembraneous catalytic core and F(0) containing the membrane proton channel, linked together by a central stalk and a peripheral stalk. During catalysis, ATP synthesis in the catalytic domain of F(1) is coupled via a rotary mechanism of the central stalk subunits to proton translocation. In terms of biological role, this protein is part of the stalk that links CF(0) to CF(1). It either transmits conformational changes from CF(0) to CF(1) or is implicated in proton conduction. In Cyanidium caldarium (Red alga), this protein is ATP synthase subunit delta, chloroplastic.